Here is a 131-residue protein sequence, read N- to C-terminus: Small ribosomal subunit protein uS11 (131 aa).

It belongs to the universal ribosomal protein uS11 family. As to quaternary structure, part of the 30S ribosomal subunit. Interacts with proteins S7 and S18. Binds to IF-3.

In terms of biological role, located on the platform of the 30S subunit, it bridges several disparate RNA helices of the 16S rRNA. Forms part of the Shine-Dalgarno cleft in the 70S ribosome. In Exiguobacterium sp. (strain ATCC BAA-1283 / AT1b), this protein is Small ribosomal subunit protein uS11.